A 1392-amino-acid chain; its full sequence is DNA-directed RNA polymerase subunit beta (1392 aa).

This sequence belongs to the RNA polymerase beta chain family. In terms of assembly, the RNAP catalytic core consists of 2 alpha, 1 beta, 1 beta' and 1 omega subunit. When a sigma factor is associated with the core the holoenzyme is formed, which can initiate transcription.

The enzyme catalyses RNA(n) + a ribonucleoside 5'-triphosphate = RNA(n+1) + diphosphate. Functionally, DNA-dependent RNA polymerase catalyzes the transcription of DNA into RNA using the four ribonucleoside triphosphates as substrates. The protein is DNA-directed RNA polymerase subunit beta of Neisseria meningitidis serogroup B (strain ATCC BAA-335 / MC58).